We begin with the raw amino-acid sequence, 205 residues long: MIGRIRGLLIEKQAPEVLVDVSGVGYEIQMPLTSFYELPELGQEAVIYTHFVVREDAQLLYGFISKQERSLFRLLIKANGVGPKLGLTILSGMTAREFVACVERDDIATLVKLPGVGKKTAERLLVEMRDKLKSLMEASVGSEREFMLQSNYTAPEAVNTAEEDAIAALLSLGYKPAQASKAVSSVYTDGMSSETLIKSALKSML.

A domain I region spans residues 1–64 (MIGRIRGLLI…EDAQLLYGFI (64 aa)). A domain II region spans residues 65–143 (SKQERSLFRL…SLMEASVGSE (79 aa)). A flexible linker region spans residues 144–156 (REFMLQSNYTAPE). The tract at residues 157–205 (AVNTAEEDAIAALLSLGYKPAQASKAVSSVYTDGMSSETLIKSALKSML) is domain III.

Belongs to the RuvA family. As to quaternary structure, homotetramer. Forms an RuvA(8)-RuvB(12)-Holliday junction (HJ) complex. HJ DNA is sandwiched between 2 RuvA tetramers; dsDNA enters through RuvA and exits via RuvB. An RuvB hexamer assembles on each DNA strand where it exits the tetramer. Each RuvB hexamer is contacted by two RuvA subunits (via domain III) on 2 adjacent RuvB subunits; this complex drives branch migration. In the full resolvosome a probable DNA-RuvA(4)-RuvB(12)-RuvC(2) complex forms which resolves the HJ.

It localises to the cytoplasm. The RuvA-RuvB-RuvC complex processes Holliday junction (HJ) DNA during genetic recombination and DNA repair, while the RuvA-RuvB complex plays an important role in the rescue of blocked DNA replication forks via replication fork reversal (RFR). RuvA specifically binds to HJ cruciform DNA, conferring on it an open structure. The RuvB hexamer acts as an ATP-dependent pump, pulling dsDNA into and through the RuvAB complex. HJ branch migration allows RuvC to scan DNA until it finds its consensus sequence, where it cleaves and resolves the cruciform DNA. In Shewanella halifaxensis (strain HAW-EB4), this protein is Holliday junction branch migration complex subunit RuvA.